We begin with the raw amino-acid sequence, 597 residues long: Period protein homolog lin-42 (597 aa).

Residues 1 to 44 (MEPAGHSSATHNIVVPNANPTQPQPLAPAMREEGATLSPPNTWS) form a disordered region. Residues 155 to 223 (LQASHVSSNF…VRQAHIDLHN (69 aa)) form the PAS domain. Disordered stretches follow at residues 313-335 (PVPSTSRHSHHHHHSSLKDQNQG), 418-450 (KSQSRPESPAKQDEPFDEKKYPPQTPLTREALT), 473-509 (DDVPSSPPAKRTTPIHWTSSSQNHYRTMAPAPPPPPG), and 555-597 (DGLL…DSQN). The segment covering 425 to 438 (SPAKQDEPFDEKKY) has biased composition (basic and acidic residues). Polar residues predominate over residues 487-497 (IHWTSSSQNHY). Over residues 561 to 577 (GATSTGGASPTSGTNSP) the composition is skewed to low complexity.

The protein resides in the nucleus. It localises to the cytoplasm. Transcriptional repressor which interacts with the promoter region of target genes. Has a specific role in developmental timing where it regulates temporal expression of a number of miRNAs and mRNAs. Controls temporal cell fate transition during embryonic and early larval development by restricting the expression of specific miRNAs, including let-7, miR-48, lin-4, miR-35 and miR-58. Restricts the accumulation of lin-29 in the hypodermis to the larval L4 stage, thus controlling terminal differentiation of seam cells. Has a role in the miRNA-mediated specification of asymmetric gene expression patterns in gustatory neurons. May also regulate genes involved in other biological processes including transport, small molecule metabolism, and growth. Inhibits dauer formation, by antagonizing daf-12. In terms of biological role, specifically required for maintaining the timing of larval development and molting cycle rhythms. In Caenorhabditis elegans, this protein is Period protein homolog lin-42.